The sequence spans 389 residues: Odorant receptor 85c (389 aa).

The Cytoplasmic segment spans residues 1 to 33; that stretch reads MKFMKYAVFFYTSVGIEPYTIDSRSKKASLWSH. The helical transmembrane segment at 34–54 threads the bilayer; the sequence is LLFWANVINLSVIVFGEILYL. Over 55 to 66 the chain is Extracellular; sequence GVAYSDGKFIDA. The helical transmembrane segment at 67–87 threads the bilayer; that stretch reads VTVLSYIGFVIVGMSKMFFIW. The Cytoplasmic portion of the chain corresponds to 88–130; sequence WKKTDLSDLVKELEHIYPNGKAEEEMYRLDRYLRSCSRISITY. A helical transmembrane segment spans residues 131 to 151; that stretch reads ALLYSVLIWTFNLFSIMQFLV. Over 152 to 199 the chain is Extracellular; that stretch reads YEKLLKIRVVGQTLPYLMYFPWNWHENWTYYVLLFCQNFAGHTSASGQ. An N-linked (GlcNAc...) asparagine glycan is attached at asparagine 178. Residues 200-220 traverse the membrane as a helical segment; that stretch reads ISTDLLLCAVATQVVMHFDYL. The Cytoplasmic segment spans residues 221-259; the sequence is ARVVEKQVLDRDWSENSRFLAKTVQYHQRILRLMDVLND. The chain crosses the membrane as a helical span at residues 260–280; it reads IFGIPLLLNFMVSTFVICFVG. The Extracellular portion of the chain corresponds to 281 to 290; the sequence is FQMTVGVPPD. A helical membrane pass occupies residues 291–311; the sequence is IMIKLFLFLFSSLSQVYLICH. Residues 312-359 lie on the Cytoplasmic side of the membrane; it reads YGQLIADASSSLSISAYKQNWQNADIRYRRALVFFIARPQRTTYLKAT. The helical transmembrane segment at 360–380 threads the bilayer; that stretch reads IFMNITRATMTDLLQVSYKFF. Residues 381–389 are Extracellular-facing; sequence ALLRTMYIK.

The protein belongs to the insect chemoreceptor superfamily. Heteromeric odorant receptor channel (TC 1.A.69) family. Or49a subfamily. Interacts with Orco. Complexes exist early in the endomembrane system in olfactory sensory neurons (OSNs), coupling these complexes to the conserved ciliary trafficking pathway.

It localises to the cell membrane. Functionally, odorant receptor which mediates acceptance or avoidance behavior, depending on its substrates. The odorant receptor repertoire encodes a large collection of odor stimuli that vary widely in identity, intensity, and duration. May form a complex with Orco to form odorant-sensing units, providing sensitive and prolonged odorant signaling and calcium permeability. The polypeptide is Odorant receptor 85c (Or85c) (Drosophila melanogaster (Fruit fly)).